We begin with the raw amino-acid sequence, 302 residues long: HTH-type transcriptional regulator ArgP (302 aa).

The HTH lysR-type domain maps to 4 to 60; sequence PDYRTLQALDAVIRERGFERAAQKLCITQSAVSQRIKQLENLFGQPLLVRTVPPRPT. Residues 21 to 40 constitute a DNA-binding region (H-T-H motif); that stretch reads FERAAQKLCITQSAVSQRIK.

This sequence belongs to the LysR transcriptional regulatory family. In terms of assembly, homodimer.

Functionally, controls the transcription of genes involved in arginine and lysine metabolism. This is HTH-type transcriptional regulator ArgP from Yersinia pseudotuberculosis serotype O:1b (strain IP 31758).